The following is a 197-amino-acid chain: TM2 domain-containing protein 1 (197 aa).

Residues 1–32 form the signal peptide; that stretch reads MAFRWRSLMRFRSTTRLLLLFTFCLTVIHSLG. Over 33 to 105 the chain is Extracellular; it reads NDVDSCDKLH…GFNKTIPCRN (73 aa). Asn-77, Asn-84, Asn-98, and Asn-105 each carry an N-linked (GlcNAc...) asparagine glycan. A helical transmembrane segment spans residues 106 to 126; the sequence is VSGYSYKVAVALSLFLGWIGA. The region spanning 108-155 is the TM2 domain; sequence GYSYKVAVALSLFLGWIGADRFYLGYPALGLLKFCTVGFCGIGSLVDF. Residues 127–143 lie on the Cytoplasmic side of the membrane; that stretch reads DRFYLGYPALGLLKFCT. Residues 144–164 traverse the membrane as a helical segment; that stretch reads VGFCGIGSLVDFMLISMQIVG. The Extracellular segment spans residues 165–197; it reads PSDGSDYIVDYYGARLTRLSITNETYRRMQPSP. Asn-187 is a glycosylation site (N-linked (GlcNAc...) asparagine).

It belongs to the TM2 family.

Its subcellular location is the membrane. This Danio rerio (Zebrafish) protein is TM2 domain-containing protein 1 (tm2d1).